The primary structure comprises 144 residues: Putative lipoprotein MAH_0816 (144 aa).

A signal peptide spans Met-1–Ala-24. Cys-25 carries N-palmitoyl cysteine lipidation. Cys-25 is lipidated: S-diacylglycerol cysteine.

Belongs to the mycobacterial 19 kDa antigen family.

Its subcellular location is the cell membrane. The sequence is that of Putative lipoprotein MAH_0816 from Mycobacterium avium subsp. hominissuis (strain TH135).